Reading from the N-terminus, the 210-residue chain is 7-cyano-7-deazaguanine synthase 2 (210 aa).

10 to 20 (HSGGMDSTTCL) serves as a coordination point for ATP. The Zn(2+) site is built by Cys180, Cys193, Cys196, and Cys199.

Belongs to the QueC family. The cofactor is Zn(2+).

It carries out the reaction 7-carboxy-7-deazaguanine + NH4(+) + ATP = 7-cyano-7-deazaguanine + ADP + phosphate + H2O + H(+). The protein operates within purine metabolism; 7-cyano-7-deazaguanine biosynthesis. Catalyzes the ATP-dependent conversion of 7-carboxy-7-deazaguanine (CDG) to 7-cyano-7-deazaguanine (preQ(0)). This is 7-cyano-7-deazaguanine synthase 2 from Rhodopseudomonas palustris (strain HaA2).